Here is a 380-residue protein sequence, read N- to C-terminus: 3-isopropylmalate dehydratase large subunit (380 aa).

Residues C262, C320, and C323 each contribute to the [4Fe-4S] cluster site.

Belongs to the aconitase/IPM isomerase family. LeuC type 2 subfamily. Heterodimer of LeuC and LeuD. [4Fe-4S] cluster serves as cofactor.

The catalysed reaction is (2R,3S)-3-isopropylmalate = (2S)-2-isopropylmalate. It participates in amino-acid biosynthesis; L-leucine biosynthesis; L-leucine from 3-methyl-2-oxobutanoate: step 2/4. Functionally, catalyzes the isomerization between 2-isopropylmalate and 3-isopropylmalate, via the formation of 2-isopropylmaleate. The polypeptide is 3-isopropylmalate dehydratase large subunit (Thermococcus kodakarensis (strain ATCC BAA-918 / JCM 12380 / KOD1) (Pyrococcus kodakaraensis (strain KOD1))).